The following is a 56-amino-acid chain: MLSRFLGPRYRELARNWIPTAGMWGTVGAVGLVWATDWRLILDWVPYINGKFKKDD.

Over 1-16 (MLSRFLGPRYRELARN) the chain is Mitochondrial matrix. A helical transmembrane segment spans residues 17-38 (WIPTAGMWGTVGAVGLVWATDW). Residues 39 to 56 (RLILDWVPYINGKFKKDD) lie on the Mitochondrial intermembrane side of the membrane.

This sequence belongs to the UQCR11/QCR10 family. In terms of assembly, component of the ubiquinol-cytochrome c oxidoreductase (cytochrome b-c1 complex, complex III, CIII), a multisubunit enzyme composed of 11 subunits. The complex is composed of 3 respiratory subunits cytochrome b, cytochrome c1 and Rieske protein UQCRFS1, 2 core protein subunits UQCRC1/QCR1 and UQCRC2/QCR2, and 6 low-molecular weight protein subunits UQCRH/QCR6, UQCRB/QCR7, UQCRQ/QCR8, UQCR10/QCR9, UQCR11/QCR10 and subunit 9, the cleavage product of Rieske protein UQCRFS1. The complex exists as an obligatory dimer and forms supercomplexes (SCs) in the inner mitochondrial membrane with NADH-ubiquinone oxidoreductase (complex I, CI) and cytochrome c oxidase (complex IV, CIV), resulting in different assemblies (supercomplex SCI(1)III(2)IV(1) and megacomplex MCI(2)III(2)IV(2)).

It localises to the mitochondrion inner membrane. Functionally, component of the ubiquinol-cytochrome c oxidoreductase, a multisubunit transmembrane complex that is part of the mitochondrial electron transport chain which drives oxidative phosphorylation. The respiratory chain contains 3 multisubunit complexes succinate dehydrogenase (complex II, CII), ubiquinol-cytochrome c oxidoreductase (cytochrome b-c1 complex, complex III, CIII) and cytochrome c oxidase (complex IV, CIV), that cooperate to transfer electrons derived from NADH and succinate to molecular oxygen, creating an electrochemical gradient over the inner membrane that drives transmembrane transport and the ATP synthase. The cytochrome b-c1 complex catalyzes electron transfer from ubiquinol to cytochrome c, linking this redox reaction to translocation of protons across the mitochondrial inner membrane, with protons being carried across the membrane as hydrogens on the quinol. In the process called Q cycle, 2 protons are consumed from the matrix, 4 protons are released into the intermembrane space and 2 electrons are passed to cytochrome c. QCR10 has a role in CIII assembly and RIP1 stability. This chain is Cytochrome b-c1 complex subunit 10 (Uqcr11), found in Mus musculus (Mouse).